A 107-amino-acid chain; its full sequence is Multidrug resistance protein mmr (107 aa).

4 helical membrane-spanning segments follow: residues 2–19 (AYLF…ATTL), 29–51 (LVPT…LSIS), 58–77 (VAYA…IAVL), and 82–104 (PVSV…LNLA).

The protein belongs to the drug/metabolite transporter (DMT) superfamily. Small multidrug resistance (SMR) (TC 2.A.7.1) family. Mmr subfamily.

Its subcellular location is the cell membrane. In terms of biological role, multidrug efflux pump. Confers resistance to tetraphenylphosphonium (TPP), erythromycin, ethidium bromide, acriflavine, safranin O and pyronin Y. The chain is Multidrug resistance protein mmr (mmr) from Mycobacterium leprae (strain TN).